The sequence spans 333 residues: uncharacterized protein (333 aa).

One can recognise a Radical SAM core domain in the interval 67–274 (HFYPTTQVVS…LEMARNLAIE (208 aa)). The [4Fe-4S] cluster site is built by Cys82, Cys86, and Cys89.

It depends on [4Fe-4S] cluster as a cofactor.

This is an uncharacterized protein from Methanocaldococcus jannaschii (strain ATCC 43067 / DSM 2661 / JAL-1 / JCM 10045 / NBRC 100440) (Methanococcus jannaschii).